Reading from the N-terminus, the 342-residue chain is Trans-3-hydroxy-L-proline dehydratase (342 aa).

Ser90 serves as the catalytic Proton acceptor. Substrate is bound by residues 91 to 92 (GS), Asp252, and 257 to 258 (GT).

This sequence belongs to the proline racemase family.

It carries out the reaction trans-3-hydroxy-L-proline = 1-pyrroline-2-carboxylate + H2O. Functionally, catalyzes the dehydration of trans-3-hydroxy-L-proline (t3LHyp) to Delta(1)-pyrroline-2-carboxylate (Pyr2C). Is likely involved in a degradation pathway that converts t3LHyp to L-proline. Displays neither proline racemase activity nor 4-hydroxyproline 2-epimerase activity. The chain is Trans-3-hydroxy-L-proline dehydratase from Allorhizobium ampelinum (strain ATCC BAA-846 / DSM 112012 / S4) (Agrobacterium vitis (strain S4)).